The sequence spans 90 residues: Probable Fe(2+)-trafficking protein (90 aa).

Belongs to the Fe(2+)-trafficking protein family.

In terms of biological role, could be a mediator in iron transactions between iron acquisition and iron-requiring processes, such as synthesis and/or repair of Fe-S clusters in biosynthetic enzymes. This is Probable Fe(2+)-trafficking protein from Nitrosomonas eutropha (strain DSM 101675 / C91 / Nm57).